The chain runs to 72 residues: Translation initiation factor IF-1 (72 aa).

One can recognise an S1-like domain in the interval 1–72 (MAKEELLEFP…TKGRITYRFK (72 aa)).

Belongs to the IF-1 family. Component of the 30S ribosomal translation pre-initiation complex which assembles on the 30S ribosome in the order IF-2 and IF-3, IF-1 and N-formylmethionyl-tRNA(fMet); mRNA recruitment can occur at any time during PIC assembly.

The protein localises to the cytoplasm. One of the essential components for the initiation of protein synthesis. Stabilizes the binding of IF-2 and IF-3 on the 30S subunit to which N-formylmethionyl-tRNA(fMet) subsequently binds. Helps modulate mRNA selection, yielding the 30S pre-initiation complex (PIC). Upon addition of the 50S ribosomal subunit IF-1, IF-2 and IF-3 are released leaving the mature 70S translation initiation complex. The chain is Translation initiation factor IF-1 from Maricaulis maris (strain MCS10) (Caulobacter maris).